Here is a 93-residue protein sequence, read N- to C-terminus: DNA-directed RNA polymerase subunit omega (93 aa).

This sequence belongs to the RNA polymerase subunit omega family. The RNAP catalytic core consists of 2 alpha, 1 beta, 1 beta' and 1 omega subunit. When a sigma factor is associated with the core the holoenzyme is formed, which can initiate transcription.

The enzyme catalyses RNA(n) + a ribonucleoside 5'-triphosphate = RNA(n+1) + diphosphate. Functionally, promotes RNA polymerase assembly. Latches the N- and C-terminal regions of the beta' subunit thereby facilitating its interaction with the beta and alpha subunits. The polypeptide is DNA-directed RNA polymerase subunit omega (Corynebacterium urealyticum (strain ATCC 43042 / DSM 7109)).